A 184-amino-acid chain; its full sequence is Protein GrpE (184 aa).

A compositionally biased stretch (basic and acidic residues) spans 1–12 (MADEQLNEKDLN). Positions 1-22 (MADEQLNEKDLNAEEAGAVDNG) are disordered.

Belongs to the GrpE family. Homodimer.

It is found in the cytoplasm. Functionally, participates actively in the response to hyperosmotic and heat shock by preventing the aggregation of stress-denatured proteins, in association with DnaK and GrpE. It is the nucleotide exchange factor for DnaK and may function as a thermosensor. Unfolded proteins bind initially to DnaJ; upon interaction with the DnaJ-bound protein, DnaK hydrolyzes its bound ATP, resulting in the formation of a stable complex. GrpE releases ADP from DnaK; ATP binding to DnaK triggers the release of the substrate protein, thus completing the reaction cycle. Several rounds of ATP-dependent interactions between DnaJ, DnaK and GrpE are required for fully efficient folding. The protein is Protein GrpE of Pseudomonas putida (strain W619).